The chain runs to 285 residues: MNMSKAEAFWQLTRMNRPIGSLLLLWPTLWALFLAADGLPDWHVLIVFVLGVVFMRSAGCVINDFADRKVDGHVKRTANRPLPSGLISSKEALSLFAVLVVCSFLLVLTMNTLTIMLSGIGIVLAIAYPFMKRVTYLPQFVLGLAFSWAIPMAYAAESNQVPPEAWLLFVINALWTIAYDTQYAMVDRDDDVKIGIKSTAILFGRYDKTIIGLLQLSVLALLIVLGSQLALSGIYYWGILAAAGFFVYQQWLIKGREREACFKAFLNNNYVGGLIFIAISASVLI.

Helical transmembrane passes span 19 to 39 (IGSL…ADGL), 42 to 62 (WHVL…GCVI), 82 to 102 (LPSG…LVVC), 104 to 124 (FLLV…GIVL), 136 to 156 (YLPQ…AYAA), 166 to 186 (WLLF…YAMV), 210 to 230 (IIGL…SQLA), 233 to 253 (GIYY…QWLI), and 265 to 285 (FLNN…SVLI).

This sequence belongs to the UbiA prenyltransferase family. It depends on Mg(2+) as a cofactor.

The protein localises to the cell inner membrane. It carries out the reaction all-trans-octaprenyl diphosphate + 4-hydroxybenzoate = 4-hydroxy-3-(all-trans-octaprenyl)benzoate + diphosphate. It participates in cofactor biosynthesis; ubiquinone biosynthesis. Catalyzes the prenylation of para-hydroxybenzoate (PHB) with an all-trans polyprenyl group. Mediates the second step in the final reaction sequence of ubiquinone-8 (UQ-8) biosynthesis, which is the condensation of the polyisoprenoid side chain with PHB, generating the first membrane-bound Q intermediate 3-octaprenyl-4-hydroxybenzoate. The chain is 4-hydroxybenzoate octaprenyltransferase from Aliivibrio fischeri (strain ATCC 700601 / ES114) (Vibrio fischeri).